Here is a 760-residue protein sequence, read N- to C-terminus: Striatin-4 (760 aa).

Residues 1–65 (MMEERAAAAV…PTAGPEPLSL (65 aa)) are disordered. Positions 7–35 (AAAVASAASSCRPLGSGTAPNPTAAAPAS) are enriched in low complexity. A compositionally biased stretch (gly residues) spans 43–54 (PVGKGGGGGGSP). At serine 53 the chain carries Phosphoserine. Residues 69–136 (LHFIQHEWAR…QERAKYHKLK (68 aa)) are a coiled coil. A caveolin-binding region spans residues 71–79 (FIQHEWARF). Residues 165–182 (ENSPLVWKEGRQLLRQYL) form a calmodulin-binding region. Phosphoserine occurs at positions 206, 223, and 276. Disordered regions lie at residues 210 to 233 (NGAG…SGGE) and 272 to 346 (EDED…PHEL). Acidic residues-rich tracts occupy residues 272–283 (EDEDSDEDDELD) and 302–317 (EMED…DAIN). Basic and acidic residues predominate over residues 332 to 346 (PDPRRCTSEGNPHEL). WD repeat units lie at residues 443–482 (SHYD…TAKK), 496–535 (AHRG…MDPY), 549–588 (GHGD…PSCL), 595–635 (GEHG…ALLT), 642–681 (SGPA…SVHS), 684–723 (AHLD…CVQE), and 730–759 (KHEE…AKVF).

This sequence belongs to the WD repeat striatin family. As to quaternary structure, part of the core of STRIPAK complexes composed of PP2A catalytic and scaffolding subunits, the striatins (PP2A regulatory subunits), the striatin-associated proteins MOB4, STRIP1 and STRIP2, PDCD10 and members of the STE20 kinases, such as STK24 and STK26. Interacts with CTTNBP2NL. In terms of tissue distribution, mainly expressed in brain but is also expressed at low levels in the kidney.

The protein resides in the cytoplasm. It is found in the membrane. The protein localises to the cell projection. Its subcellular location is the dendritic spine. Calmodulin-binding scaffolding protein which is the center of the striatin-interacting phosphatase and kinase (STRIPAK) complexes. STRIPAK complexes have critical roles in protein (de)phosphorylation and are regulators of multiple signaling pathways including Hippo, MAPK, nuclear receptor and cytoskeleton remodeling. Different types of STRIPAK complexes are involved in a variety of biological processes such as cell growth, differentiation, apoptosis, metabolism and immune regulation. Key regulator of the expanded Hippo signaling pathway by interacting and allowing the inhibition of MAP4K kinases by the STRIPAK complex. This is Striatin-4 (Strn4) from Mus musculus (Mouse).